The sequence spans 428 residues: Transcription factor Sp7 (428 aa).

The disordered stretch occupies residues 30-84 (SSPLRDSTTLGKGGTKKPYADLSAPKTMGDAYPAPFSSTNGLLSPAGSPPAPASG). 2 positions are modified to N6-propionyllysine: Lys41 and Lys45. Lys55 participates in a covalent cross-link: Glycyl lysine isopeptide (Lys-Gly) (interchain with G-Cter in ubiquitin). Positions 153–161 (TPWWDMHPG) match the 9aaTAD motif. Lys227 is covalently cross-linked (Glycyl lysine isopeptide (Lys-Gly) (interchain with G-Cter in ubiquitin)). Residues 229–257 (KAVGNSGQLEGSGAAKPPRGAGTGGSGGY) are disordered. 3 consecutive C2H2-type zinc fingers follow at residues 291-315 (HSCHIPGCGKVYGKASHLKAHLRWH), 321-345 (FVCNWLFCGKRFTRSDELERHVRTH), and 351-373 (FTCLLCSKRFTRSDHLSKHQRTH). Residues Lys358 and Lys368 each carry the N6-propionyllysine modification. The interval 364 to 428 (DHLSKHQRTH…SPEQSNLLEI (65 aa)) is disordered.

The protein belongs to the Sp1 C2H2-type zinc-finger protein family. In terms of assembly, interacts with RIOX1; the interaction is direct and inhibits transcription activator activity. In terms of processing, propionylated. Depropionylation at Lys-368 by SIRT7 activates transcription factor activity and positively regulates bone formation by osteoblasts. Ubiquitination at leads to proteasomal degradation. SP7 is a short-live protein with an endogenous half-life of approximately 12 hours. Osteoblast/chondrocyte specific.

It is found in the nucleus. Its function is as follows. Transcriptional activator essential for osteoblast differentiation. Binds to SP1 and EKLF consensus sequences and to other G/C-rich sequences. This Mus musculus (Mouse) protein is Transcription factor Sp7 (Sp7).